A 114-amino-acid polypeptide reads, in one-letter code: uncharacterized protein (114 aa).

This is an uncharacterized protein from Methanocaldococcus jannaschii (strain ATCC 43067 / DSM 2661 / JAL-1 / JCM 10045 / NBRC 100440) (Methanococcus jannaschii).